Reading from the N-terminus, the 542-residue chain is CTP synthase (542 aa).

Residues 1–266 (MATNYIFVTG…DDLICQRFRL (266 aa)) are amidoligase domain. A CTP-binding site is contributed by serine 14. Serine 14 lines the UTP pocket. ATP-binding positions include 15-20 (SLGKGI) and aspartate 72. Residues aspartate 72 and glutamate 140 each coordinate Mg(2+). CTP contacts are provided by residues 147–149 (DIE), 187–192 (KTKPTQ), and lysine 223. Residues 187-192 (KTKPTQ) and lysine 223 each bind UTP. Residue 239–241 (KDV) participates in ATP binding. A Glutamine amidotransferase type-1 domain is found at 291-542 (TIGMVGKYVE…VKAAKENQKK (252 aa)). Residue glycine 352 coordinates L-glutamine. Cysteine 379 acts as the Nucleophile; for glutamine hydrolysis in catalysis. L-glutamine contacts are provided by residues 380–383 (LGMQ), glutamate 403, and arginine 470. Catalysis depends on residues histidine 515 and glutamate 517.

The protein belongs to the CTP synthase family. As to quaternary structure, homotetramer.

It catalyses the reaction UTP + L-glutamine + ATP + H2O = CTP + L-glutamate + ADP + phosphate + 2 H(+). It carries out the reaction L-glutamine + H2O = L-glutamate + NH4(+). The enzyme catalyses UTP + NH4(+) + ATP = CTP + ADP + phosphate + 2 H(+). It functions in the pathway pyrimidine metabolism; CTP biosynthesis via de novo pathway; CTP from UDP: step 2/2. Allosterically activated by GTP, when glutamine is the substrate; GTP has no effect on the reaction when ammonia is the substrate. The allosteric effector GTP functions by stabilizing the protein conformation that binds the tetrahedral intermediate(s) formed during glutamine hydrolysis. Inhibited by the product CTP, via allosteric rather than competitive inhibition. Functionally, catalyzes the ATP-dependent amination of UTP to CTP with either L-glutamine or ammonia as the source of nitrogen. Regulates intracellular CTP levels through interactions with the four ribonucleotide triphosphates. The protein is CTP synthase of Mannheimia succiniciproducens (strain KCTC 0769BP / MBEL55E).